We begin with the raw amino-acid sequence, 155 residues long: MADNPIYQKLGQLGQHTVQPASPEEAQLERVENPHSGTLYLTRFVAPEFTSLCPVTGQPDFAHLVIDYAPGPWLVESKSLKLYLTSFRNHGAFHEECTVSIGKKIFDFTEATWLRISGYWYPRGGIPIDVFWQSGDVPKGLYVPDTGVASYRGRG.

The Thioimide intermediate role is filled by Cys-53. The Proton donor role is filled by Asp-60. Residues 75 to 77 (VES) and 94 to 95 (HE) each bind substrate.

Belongs to the GTP cyclohydrolase I family. QueF type 1 subfamily.

It localises to the cytoplasm. The catalysed reaction is 7-aminomethyl-7-carbaguanine + 2 NADP(+) = 7-cyano-7-deazaguanine + 2 NADPH + 3 H(+). It functions in the pathway tRNA modification; tRNA-queuosine biosynthesis. Catalyzes the NADPH-dependent reduction of 7-cyano-7-deazaguanine (preQ0) to 7-aminomethyl-7-deazaguanine (preQ1). The protein is NADPH-dependent 7-cyano-7-deazaguanine reductase of Hyphomonas neptunium (strain ATCC 15444).